The chain runs to 753 residues: Fatty acid oxidation complex subunit alpha (753 aa).

The tract at residues 8–197 (SVTHPAFTLN…KMGLVDDVVP (190 aa)) is enoyl-CoA hydratase. The segment at 313–747 (RAIHRVGVLG…FYPVDANIDE (435 aa)) is 3-hydroxyacyl-CoA dehydrogenase. The tract at residues 593–622 (SNPTLHSNSTKNSSPTKNGNSPAKRNSFKW) is disordered. The span at 599-614 (SNSTKNSSPTKNGNSP) shows a compositional bias: low complexity.

In the N-terminal section; belongs to the enoyl-CoA hydratase/isomerase family. This sequence in the central section; belongs to the 3-hydroxyacyl-CoA dehydrogenase family. In terms of assembly, heterotetramer of two alpha chains (FadJ) and two beta chains (FadI).

The protein resides in the cytoplasm. It catalyses the reaction a (3S)-3-hydroxyacyl-CoA = a (2E)-enoyl-CoA + H2O. The catalysed reaction is a 4-saturated-(3S)-3-hydroxyacyl-CoA = a (3E)-enoyl-CoA + H2O. The enzyme catalyses a (3S)-3-hydroxyacyl-CoA + NAD(+) = a 3-oxoacyl-CoA + NADH + H(+). It carries out the reaction (3S)-3-hydroxybutanoyl-CoA = (3R)-3-hydroxybutanoyl-CoA. It functions in the pathway lipid metabolism; fatty acid beta-oxidation. Catalyzes the formation of a hydroxyacyl-CoA by addition of water on enoyl-CoA. Also exhibits 3-hydroxyacyl-CoA epimerase and 3-hydroxyacyl-CoA dehydrogenase activities. This chain is Fatty acid oxidation complex subunit alpha, found in Yersinia pseudotuberculosis serotype I (strain IP32953).